The following is a 314-amino-acid chain: Beta-lactamase (314 aa).

The segment at residues 1-39 (MHPSTSRPSRRTLLTATAGAALAAATLVPGTAHASSGGR) is a signal peptide (tat-type signal). The segment at 31–50 (TAHASSGGRGHGSGSVSDAE) is disordered. Ser89 acts as the Acyl-ester intermediate in catalysis. A substrate-binding site is contributed by 259–261 (KTG).

The protein belongs to the class-A beta-lactamase family. Post-translationally, predicted to be exported by the Tat system. The position of the signal peptide cleavage has been experimentally proven.

It catalyses the reaction a beta-lactam + H2O = a substituted beta-amino acid. This is Beta-lactamase from Streptomyces albus G.